We begin with the raw amino-acid sequence, 209 residues long: Uracil phosphoribosyltransferase (209 aa).

5-phospho-alpha-D-ribose 1-diphosphate is bound by residues arginine 79, arginine 104, and 131 to 139; that span reads DPMLATGAS. Residues isoleucine 194 and 199 to 201 contribute to the uracil site; that span reads GDA. Aspartate 200 is a binding site for 5-phospho-alpha-D-ribose 1-diphosphate.

It belongs to the UPRTase family. Mg(2+) is required as a cofactor.

The enzyme catalyses UMP + diphosphate = 5-phospho-alpha-D-ribose 1-diphosphate + uracil. Its pathway is pyrimidine metabolism; UMP biosynthesis via salvage pathway; UMP from uracil: step 1/1. Its activity is regulated as follows. Allosterically activated by GTP. Catalyzes the conversion of uracil and 5-phospho-alpha-D-ribose 1-diphosphate (PRPP) to UMP and diphosphate. The sequence is that of Uracil phosphoribosyltransferase from Staphylococcus saprophyticus subsp. saprophyticus (strain ATCC 15305 / DSM 20229 / NCIMB 8711 / NCTC 7292 / S-41).